The sequence spans 316 residues: tRNA dimethylallyltransferase (316 aa).

Residue 12 to 19 participates in ATP binding; it reads GPTASGKT. A substrate-binding site is contributed by 14–19; the sequence is TASGKT. 2 interaction with substrate tRNA regions span residues 37–40 and 161–165; these read DSAL and QRILR.

It belongs to the IPP transferase family. As to quaternary structure, monomer. Mg(2+) serves as cofactor.

The catalysed reaction is adenosine(37) in tRNA + dimethylallyl diphosphate = N(6)-dimethylallyladenosine(37) in tRNA + diphosphate. Its function is as follows. Catalyzes the transfer of a dimethylallyl group onto the adenine at position 37 in tRNAs that read codons beginning with uridine, leading to the formation of N6-(dimethylallyl)adenosine (i(6)A). The protein is tRNA dimethylallyltransferase of Idiomarina loihiensis (strain ATCC BAA-735 / DSM 15497 / L2-TR).